A 229-amino-acid chain; its full sequence is Small ribosomal subunit protein uS3 (229 aa).

The region spanning 39–107 is the KH type-2 domain; the sequence is IRKFLKKELY…EVFINIKEEK (69 aa).

It belongs to the universal ribosomal protein uS3 family. In terms of assembly, part of the 30S ribosomal subunit. Forms a tight complex with proteins S10 and S14.

Binds the lower part of the 30S subunit head. Binds mRNA in the 70S ribosome, positioning it for translation. The protein is Small ribosomal subunit protein uS3 of Nitratiruptor sp. (strain SB155-2).